Here is a 146-residue protein sequence, read N- to C-terminus: Hemoglobin subunit beta (146 aa).

The residue at position 1 (Val1) is an N-acetylvaline. In terms of domain architecture, Globin spans His2–His146. Thr12 is subject to Phosphothreonine. Lys59 is subject to N6-acetyllysine. His63 lines the heme b pocket. Lys82 is subject to N6-acetyllysine. His92 contacts heme b. Cys93 is modified (S-nitrosocysteine). At Lys144 the chain carries N6-acetyllysine.

It belongs to the globin family. Heterotetramer of two alpha chains and two beta chains. As to expression, red blood cells.

Its function is as follows. Involved in oxygen transport from the lung to the various peripheral tissues. This Ornithorhynchus anatinus (Duckbill platypus) protein is Hemoglobin subunit beta (HBB).